The chain runs to 125 residues: uncharacterized protein (125 aa).

Residues 1–46 (MFFDTKVLNYPTIHKSISMASTMQRTSSSAASNERQLSQLQRRAPS) constitute a chloroplast transit peptide.

The protein localises to the plastid. Its subcellular location is the chloroplast. This is an uncharacterized protein from Arabidopsis thaliana (Mouse-ear cress).